A 579-amino-acid polypeptide reads, in one-letter code: Aspartate--tRNA(Asp/Asn) ligase (579 aa).

Glu171 is an L-aspartate binding site. The tract at residues 195–198 (QLFK) is aspartate. Arg217 is an L-aspartate binding site. Residues 217-219 (RDE) and Gln226 each bind ATP. His444 contacts L-aspartate. Glu475 contributes to the ATP binding site. Arg482 is an L-aspartate binding site. ATP is bound at residue 527 to 530 (GLDR).

Belongs to the class-II aminoacyl-tRNA synthetase family. Type 1 subfamily. As to quaternary structure, homodimer.

It localises to the cytoplasm. It catalyses the reaction tRNA(Asx) + L-aspartate + ATP = L-aspartyl-tRNA(Asx) + AMP + diphosphate. In terms of biological role, aspartyl-tRNA synthetase with relaxed tRNA specificity since it is able to aspartylate not only its cognate tRNA(Asp) but also tRNA(Asn). Reaction proceeds in two steps: L-aspartate is first activated by ATP to form Asp-AMP and then transferred to the acceptor end of tRNA(Asp/Asn). This is Aspartate--tRNA(Asp/Asn) ligase from Thermotoga neapolitana (strain ATCC 49049 / DSM 4359 / NBRC 107923 / NS-E).